The chain runs to 348 residues: MNDRQAALDQALKQIEKQFGKGSIMKLGEHSDQNISTISSGSLALDIALGVGGYPRGRIIEVYGPESSGKTTVALHAIAEVQAQGGTAAFIDAEHALDPAYAKNLGVNIDELLLSQPDTGEQALEIAEALVRSGAVDMLVIDSVAALVPRAEIEGEMGDAHVGLQARLMSQALRKLSGAINKSKTIAIFINQIREKVGVMFGNPEITPGGRALKFYSTVRLEVRRAEQLKQGTDVMGNKTKIKVVKNKVAPPFRIAEVDIMYGEGISREGELVDMAAEVDVINKSGSWYSYKEERIGQGRENAKQYLKEHTDIRDEISQRVREEYEIDGANKEPLEETEETLSLLDDE.

64 to 71 (GPESSGKT) provides a ligand contact to ATP. Over residues 325–335 (YEIDGANKEPL) the composition is skewed to basic and acidic residues. Residues 325–348 (YEIDGANKEPLEETEETLSLLDDE) form a disordered region. Residues 336 to 348 (EETEETLSLLDDE) show a composition bias toward acidic residues.

The protein belongs to the RecA family.

It localises to the cytoplasm. Its function is as follows. Can catalyze the hydrolysis of ATP in the presence of single-stranded DNA, the ATP-dependent uptake of single-stranded DNA by duplex DNA, and the ATP-dependent hybridization of homologous single-stranded DNAs. It interacts with LexA causing its activation and leading to its autocatalytic cleavage. This Listeria welshimeri serovar 6b (strain ATCC 35897 / DSM 20650 / CCUG 15529 / CIP 8149 / NCTC 11857 / SLCC 5334 / V8) protein is Protein RecA.